Here is a 56-residue protein sequence, read N- to C-terminus: UPF0291 protein Clos_1191 (56 aa).

Belongs to the UPF0291 family.

Its subcellular location is the cytoplasm. This Alkaliphilus oremlandii (strain OhILAs) (Clostridium oremlandii (strain OhILAs)) protein is UPF0291 protein Clos_1191.